Consider the following 249-residue polypeptide: UPF0246 protein EUBREC_1226 (249 aa).

It belongs to the UPF0246 family.

This chain is UPF0246 protein EUBREC_1226, found in Agathobacter rectalis (strain ATCC 33656 / DSM 3377 / JCM 17463 / KCTC 5835 / VPI 0990) (Eubacterium rectale).